The chain runs to 206 residues: Large ribosomal subunit protein uL4 (206 aa).

The segment at 45-76 (RQGTQSAKTRTEVSGGGIKPWRQKGTGRARQG) is disordered.

The protein belongs to the universal ribosomal protein uL4 family. As to quaternary structure, part of the 50S ribosomal subunit.

Its function is as follows. One of the primary rRNA binding proteins, this protein initially binds near the 5'-end of the 23S rRNA. It is important during the early stages of 50S assembly. It makes multiple contacts with different domains of the 23S rRNA in the assembled 50S subunit and ribosome. Functionally, forms part of the polypeptide exit tunnel. The chain is Large ribosomal subunit protein uL4 from Clostridium acetobutylicum (strain ATCC 824 / DSM 792 / JCM 1419 / IAM 19013 / LMG 5710 / NBRC 13948 / NRRL B-527 / VKM B-1787 / 2291 / W).